A 363-amino-acid polypeptide reads, in one-letter code: 2,5-diketocamphane 1,2-monooxygenase 2 (363 aa).

FMN is bound by residues Met-74 and 186 to 194 (TGLTKNSSS).

It belongs to the bacterial luciferase oxidoreductase family. As to quaternary structure, homodimer. Likely forms a loose transient complex with a P.putida flavin reductase that provides the required FMNH(2) to the enzyme.

The enzyme catalyses (1R,4R)-bornane-2,5-dione + FMNH2 + O2 = (1R,4R)-5-oxo-1,2-campholide + FMN + H2O + H(+). It functions in the pathway terpene metabolism; (R)-camphor degradation. In terms of biological role, involved in the degradation and assimilation of (+)-camphor, which allows P.putida strain NCIMB 10007 to grow on this enantiomer of camphor as the sole carbon source. Catalyzes the FMNH(2)-dependent lactonization of 2,5-diketocamphane via a Baeyer-Villiger oxidation to produce the unstable lactone 5-oxo-1,2-campholide with (R,R) configuration, that presumably undergoes spontaneous hydrolysis to form 2-oxo-Delta(3)-4,5,5-trimethylcyclopentenylacetate. Is also able to convert (+)-camphor and norcamphor to the corresponding lactone in vitro. Shows no conversion of (-)-camphor, (+)-fenchone, (-)-fenchone, and (+)-nopinone. Acts on other bicyclic ketones and, to a lesser extent, on some 2- and 4-substituted monocyclic ketones. In Pseudomonas putida (Arthrobacter siderocapsulatus), this protein is 2,5-diketocamphane 1,2-monooxygenase 2.